Consider the following 412-residue polypeptide: Putative oxidoreductase bli-4, mitochondrial (412 aa).

A mitochondrion-targeting transit peptide spans 1–55; sequence MSTKLCQRIARTATLSPTSLVPRSSRLIPIVSSAAVRPSSAIPTRRPFSTTESRY. Isoleucine 108, asparagine 120, asparagine 186, tyrosine 269, lysine 273, valine 308, threonine 310, and glutamine 312 together coordinate NADP(+). Tyrosine 269 serves as the catalytic Proton donor. The Lowers pKa of active site Tyr role is filled by lysine 273.

Belongs to the short-chain dehydrogenases/reductases (SDR) family.

Its subcellular location is the mitochondrion. Functionally, may play a role as an NAD-dependent dehydrogenase in the mitochondria. This Neurospora crassa (strain ATCC 24698 / 74-OR23-1A / CBS 708.71 / DSM 1257 / FGSC 987) protein is Putative oxidoreductase bli-4, mitochondrial (bli-4).